The sequence spans 199 residues: Photosystem I reaction center subunit XI (199 aa).

2 helical membrane passes run 108 to 128 (LTAG…LLVL) and 165 to 185 (FWLG…TLHL).

This sequence belongs to the PsaL family.

It is found in the cellular thylakoid membrane. This is Photosystem I reaction center subunit XI from Prochlorococcus marinus (strain AS9601).